The chain runs to 250 residues: tRNA:m(4)X modification enzyme TRM13 (250 aa).

Residues 1–10 (MGRAPAKRKP) are compositionally biased toward basic residues. Positions 1–20 (MGRAPAKRKPSSPPPPPPPG) are disordered. Residues 11-20 (SSPPPPPPPG) show a composition bias toward pro residues. The CHHC U11-48K-type zinc-finger motif lies at 62–89 (LVPCPVDPSHTVLEENLEAHVGKCPLKK). The Zn(2+) site is built by Cys-65, His-71, His-81, and Cys-85.

The protein belongs to the methyltransferase TRM13 family.

The protein localises to the nucleus. The protein resides in the cytoplasm. The catalysed reaction is cytidine(4) in tRNA(Pro) + S-adenosyl-L-methionine = 2'-O-methylcytidine(4) in tRNA(Pro) + S-adenosyl-L-homocysteine + H(+). It carries out the reaction cytidine(4) in tRNA(Gly)(GCC) + S-adenosyl-L-methionine = 2'-O-methylcytidine(4) in tRNA(Gly)(GCC) + S-adenosyl-L-homocysteine + H(+). It catalyses the reaction adenosine(4) in tRNA(His) + S-adenosyl-L-methionine = 2'-O-methyladenosine(4) in tRNA(His) + S-adenosyl-L-homocysteine + H(+). Functionally, tRNA methylase that catalyzes 2'-O-methyladenosine (Am) nucleoside formation on tRNA(Gly)(GCC) in vitro. May 2'-O-methylate cytidine(4) in tRNA(Pro) and tRNA(Gly)(GCC), and adenosine(4) in tRNA(His). Involved in salt stress tolerance. This chain is tRNA:m(4)X modification enzyme TRM13, found in Oryza sativa subsp. japonica (Rice).